The following is a 355-amino-acid chain: Peptide chain release factor 1 (355 aa).

Position 233 is an N5-methylglutamine (Gln233).

This sequence belongs to the prokaryotic/mitochondrial release factor family. Methylated by PrmC. Methylation increases the termination efficiency of RF1.

It is found in the cytoplasm. Functionally, peptide chain release factor 1 directs the termination of translation in response to the peptide chain termination codons UAG and UAA. The protein is Peptide chain release factor 1 of Bacillus mycoides (strain KBAB4) (Bacillus weihenstephanensis).